The primary structure comprises 372 residues: Aryl-hydrocarbon-interacting protein-like 1 (372 aa).

The region spanning 53 to 145 (RQVDQPMHII…DLDELQKEPQ (93 aa)) is the PPIase FKBP-type domain. TPR repeat units follow at residues 178 to 211 (VPVL…LRNL), 230 to 263 (NTLT…HPGI), and 264 to 297 (VKAY…EPSM). Residues 315 to 372 (KQEEERLRCRNMLSQGATQPPTEPPAEPHTAPPAELSTGPPAEPPAELPLSPGHSLQH) form a disordered region. A compositionally biased stretch (pro residues) spans 335–345 (PTEPPAEPHTA).

In terms of assembly, interacts with NUB1.

It is found in the cytoplasm. The protein resides in the nucleus. May be important in protein trafficking and/or protein folding and stabilization. The polypeptide is Aryl-hydrocarbon-interacting protein-like 1 (AIPL1) (Papio cynocephalus (Yellow baboon)).